The primary structure comprises 206 residues: Large ribosomal subunit protein uL3 (206 aa).

The interval H126 to V155 is disordered.

The protein belongs to the universal ribosomal protein uL3 family. In terms of assembly, part of the 50S ribosomal subunit. Forms a cluster with proteins L14 and L19.

In terms of biological role, one of the primary rRNA binding proteins, it binds directly near the 3'-end of the 23S rRNA, where it nucleates assembly of the 50S subunit. In Leptospira interrogans serogroup Icterohaemorrhagiae serovar copenhageni (strain Fiocruz L1-130), this protein is Large ribosomal subunit protein uL3.